The following is a 177-amino-acid chain: Ribulose bisphosphate carboxylase small subunit, chloroplastic 3 (177 aa).

The N-terminal 56 residues, 1 to 56 (MASSMMASTAAAVARAGPAQSSMVPFNACRSSVPFPATRKANNNLSTLPGNGGRVS), are a transit peptide targeting the chloroplast.

The protein belongs to the RuBisCO small chain family. As to quaternary structure, heterohexadecamer of 8 large and 8 small subunits.

It localises to the plastid. The protein localises to the chloroplast. Functionally, ruBisCO catalyzes two reactions: the carboxylation of D-ribulose 1,5-bisphosphate, the primary event in carbon dioxide fixation, as well as the oxidative fragmentation of the pentose substrate. Both reactions occur simultaneously and in competition at the same active site. Although the small subunit is not catalytic it is essential for maximal activity. This chain is Ribulose bisphosphate carboxylase small subunit, chloroplastic 3, found in Lemna gibba (Swollen duckweed).